We begin with the raw amino-acid sequence, 829 residues long: Leucine--tRNA ligase (829 aa).

The short motif at 40–50 is the 'HIGH' region element; that stretch reads PYPSGNIHMGH. The short motif at 594–598 is the 'KMSKS' region element; the sequence is KMSKS. Lys597 provides a ligand contact to ATP.

Belongs to the class-I aminoacyl-tRNA synthetase family.

Its subcellular location is the cytoplasm. The catalysed reaction is tRNA(Leu) + L-leucine + ATP = L-leucyl-tRNA(Leu) + AMP + diphosphate. The protein is Leucine--tRNA ligase of Anaplasma marginale (strain St. Maries).